The following is a 98-amino-acid chain: Small ribosomal subunit protein bS6 (98 aa).

It belongs to the bacterial ribosomal protein bS6 family.

In terms of biological role, binds together with bS18 to 16S ribosomal RNA. This is Small ribosomal subunit protein bS6 from Staphylococcus carnosus (strain TM300).